The sequence spans 496 residues: MGKVAVGATVVCTAAVCAVAVLVVRRRMQSSGKWGRVLAILKAFEEDCATPISKLRQVADAMTVEMHAGLASDGGSKLKMLISYVDNLPSGDEKGLFYALDLGGTNFRVMRVLLGGKQERVVKQEFEEVSIPPHLMTGGSDELFNFIAEALAKFVATECEDFHLPEGRQRELGFTFSFPVKQTSLSSGSLIKWTKGFSIEEAVGQDVVGALNKALERVGLDMRIAALVNDTVGTLAGGRYYNPDVVAAVILGTGTNAAYVERATAIPKWHGLLPKSGEMVINMEWGNFRSSHLPLTEFDHTLDFESLNPGEQILEKIISGMYLGEILRRVLLKMAEDAAFFGDTVPSKLRIPFIIRTPHMSAMHNDTSPDLKIVGSKIKDILEVPTTSLKMRKVVISLCNIIATRGARLSAAGIYGILKKLGRDTTKDEEVQKSVIAMDGGLFEHYTQFSECMESSLKELLGDEASGSVEVTHSNDGSGIGAALLAASHSLYLEDS.

The chain crosses the membrane as a helical span at residues 4-24; that stretch reads VAVGATVVCTAAVCAVAVLVV. The region spanning 35 to 487 is the Hexokinase domain; the sequence is GRVLAILKAF…SGIGAALLAA (453 aa). A hexokinase small subdomain region spans residues 90–228; the sequence is SGDEKGLFYA…GLDMRIAALV (139 aa). Positions 104, 105, and 106 each coordinate ADP. Positions 194, 195, 229, and 230 each coordinate D-glucose. The segment at 229-476 is hexokinase large subdomain; it reads NDTVGTLAGG…GSVEVTHSND (248 aa). T253 provides a ligand contact to ADP. Positions 256, 284, and 315 each coordinate D-glucose. G441 lines the ADP pocket.

It belongs to the hexokinase family. As to quaternary structure, interacts with RPT5B in nucleus. Interacts with RHIP1. Interacts with KING1 in mitochondria. Interacts with CLF (via SANT domain) and EZA1/SWN (via SANT domain) in nucleus. As to expression, highly expressed in flowers and siliques, at intermediate levels in roots and stems, and at lower levels in rosette and cauline leaves.

It is found in the mitochondrion outer membrane. It localises to the nucleus. It catalyses the reaction a D-hexose + ATP = a D-hexose 6-phosphate + ADP + H(+). It carries out the reaction D-fructose + ATP = D-fructose 6-phosphate + ADP + H(+). The enzyme catalyses D-glucose + ATP = D-glucose 6-phosphate + ADP + H(+). It participates in carbohydrate metabolism; hexose metabolism. It functions in the pathway carbohydrate degradation; glycolysis; D-glyceraldehyde 3-phosphate and glycerone phosphate from D-glucose: step 1/4. Functionally, fructose and glucose phosphorylating enzyme. May be involved in the phosphorylation of glucose during the export from mitochondrion to cytosol. Acts as a sugar sensor which may regulate sugar-dependent gene repression or activation. Mediates the effects of sugar on plant growth and development independently of its catalytic activity or the sugar metabolism. May regulate the execution of program cell death in plant cells. Promotes roots and leaves growth. Together with sugar, is involved in the regulation of the expression of aquaporin genes, and reduces leaf water conductance, to coordinate sugar levels with the loss of water through transpiration. Regulates cell proliferation and expansion early during leaf development. Involved in sucrose-induced leaf growth stimulation independently of GPT2. May participate to the stimulation of hypocotyl elongation under long-day (LD) conditions. Forms a nuclear complex with CLF and EZA1/SWN to target common glucose-responsive genes and regulate glucose signaling. Is required for CLF- and EZA1/SWN-mediated histone H3 trimethylation on 'Lys-27' (H3K27me3) and glucose-mediated gene repression. The sequence is that of Hexokinase-1 from Arabidopsis thaliana (Mouse-ear cress).